The primary structure comprises 118 residues: Transcription factor PAR2 (118 aa).

The tract at residues 1–59 (MEKTLATSHTKRSSPPSPSSAVNTSSTGFNRRTRQRLSDATASVSETDVEDEDEDEEGV) is disordered. Polar residues predominate over residues 19 to 30 (SSAVNTSSTGFN). The region spanning 43-92 (SVSETDVEDEDEDEEGVEEKIEALQTIVPGGTELGVDALFEETASYILAL) is the bHLH domain. Positions 47–59 (TDVEDEDEDEEGV) are enriched in acidic residues.

Belongs to the bHLH protein family. Homodimer.

The protein resides in the nucleus. Its function is as follows. Atypical bHLH transcription factor that acts as a negative regulator of a variety of shade avoidance syndrome (SAS) responses, including seedling elongation and photosynthetic pigment accumulation. Acts as a direct transcriptional repressor of two auxin-responsive genes, SAUR15 and SAUR68. May function in integrating shade and hormone transcriptional networks in response to light and auxin changes. The polypeptide is Transcription factor PAR2 (PAR2) (Arabidopsis thaliana (Mouse-ear cress)).